Consider the following 115-residue polypeptide: NADH-ubiquinone oxidoreductase chain 3 (115 aa).

A run of 3 helical transmembrane segments spans residues 4 to 24 (ILTLFINITLSLCLISIAFWL), 55 to 75 (FFLVGITFLLFDLEIALLLPL), and 84 to 104 (SYLTMTVSFMLVSALALGLAY).

This sequence belongs to the complex I subunit 3 family. As to quaternary structure, core subunit of respiratory chain NADH dehydrogenase (Complex I) which is composed of 45 different subunits. Interacts with TMEM186. Interacts with TMEM242.

It localises to the mitochondrion inner membrane. The catalysed reaction is a ubiquinone + NADH + 5 H(+)(in) = a ubiquinol + NAD(+) + 4 H(+)(out). Its function is as follows. Core subunit of the mitochondrial membrane respiratory chain NADH dehydrogenase (Complex I) which catalyzes electron transfer from NADH through the respiratory chain, using ubiquinone as an electron acceptor. Essential for the catalytic activity of complex I. The protein is NADH-ubiquinone oxidoreductase chain 3 of Necromys lactens (Rufous-bellied bolo mouse).